The following is a 250-amino-acid chain: Eukaryotic translation initiation factor 3 subunit K (250 aa).

The PCI domain occupies 46–229; that stretch reads FDCYANLALL…KENEARSEVK (184 aa).

The protein belongs to the eIF-3 subunit K family. Component of the eukaryotic translation initiation factor 3 (eIF-3) complex.

It localises to the cytoplasm. In terms of biological role, component of the eukaryotic translation initiation factor 3 (eIF-3) complex, which is involved in protein synthesis of a specialized repertoire of mRNAs and, together with other initiation factors, stimulates binding of mRNA and methionyl-tRNAi to the 40S ribosome. The eIF-3 complex specifically targets and initiates translation of a subset of mRNAs involved in cell proliferation. The chain is Eukaryotic translation initiation factor 3 subunit K from Emericella nidulans (strain FGSC A4 / ATCC 38163 / CBS 112.46 / NRRL 194 / M139) (Aspergillus nidulans).